A 475-amino-acid polypeptide reads, in one-letter code: Equilibrative nucleoside transporter 3 (475 aa).

The tract at residues 1–24 (MAVVSEDDFQHSSNSTYRTTSSSL) is disordered. Over 1–53 (MAVVSEDDFQHSSNSTYRTTSSSLRADQEALLEKLLDRPPPGLQRPEDRFCGT) the chain is Cytoplasmic. Low complexity predominate over residues 12–23 (SSNSTYRTTSSS). Phosphoserine is present on residues serine 21 and serine 23. Residues 31 to 32 (LL) carry the Dileucine internalization motif motif. Residues 54–74 (YIIFFSLGIGSLLPWNFFITA) traverse the membrane as a helical segment. Residues 75–105 (KEYWMFKLRNSSSPATGEDPEGSDILNYFES) lie on the Extracellular side of the membrane. Asparagine 84 carries an N-linked (GlcNAc...) asparagine glycan. The helical transmembrane segment at 106-126 (YLAVASTVPSMLCLVANFLLV) threads the bilayer. At 127–134 (NRVAVHIR) the chain is on the cytoplasmic side. The chain crosses the membrane as a helical span at residues 135 to 155 (VLASLTVILAIFMVITALVKV). Residues 156-162 (DTSSWTR) lie on the Extracellular side of the membrane. A helical transmembrane segment spans residues 163-183 (GFFAVTIVCMVILSGASTVFS). Over 184–199 (SSIYGMTGSFPMRNSQ) the chain is Cytoplasmic. A helical membrane pass occupies residues 200–220 (ALISGGAMGGTVSAVASLVDL). The Extracellular portion of the chain corresponds to 221-230 (AASSDVRNSA). The helical transmembrane segment at 231–251 (LAFFLTATVFLVLCMGLYLLL) threads the bilayer. Residues 252 to 305 (SRLEYARYYMRPVLAAHVFSGEEELPQDSLSAPSVASRFIDSHTPPLRPILKKT) lie on the Cytoplasmic side of the membrane. A helical membrane pass occupies residues 306-326 (ASLGFCVTYVFFITSLIYPAI). Residues 327-337 (CTNIESLNKGS) lie on the Extracellular side of the membrane. The chain crosses the membrane as a helical span at residues 338 to 358 (GSLWTTKFFIPLTTFLLYNFA). Residues 359 to 377 (DLCGRQLTAWIQVPGPNSK) lie on the Cytoplasmic side of the membrane. Residues 378–398 (ALPGFVLLRTCLIPLFVLCNY) form a helical membrane-spanning segment. Topologically, residues 399-415 (QPRVHLKTVVFQSDVYP) are extracellular. A helical transmembrane segment spans residues 416–436 (ALLSSLLGLSNGYLSTLALLY). Residues 437 to 454 (GPKIVPRELAEATGVVMS) are Cytoplasmic-facing. A helical transmembrane segment spans residues 455–475 (FYVCLGLTLGSACSTLLVHLI).

The protein belongs to the SLC29A/ENT transporter (TC 2.A.57) family. In terms of tissue distribution, widely expressed in both adult and fetal tissues. Highest levels in placenta, uterus, ovary, spleen, lymph node and bone marrow. Expressed in liver. Lowest levels in brain and heart. Expressed in macrophages.

Its subcellular location is the lysosome membrane. It localises to the late endosome membrane. It is found in the mitochondrion membrane. The protein localises to the cell membrane. It catalyses the reaction adenosine(in) = adenosine(out). The enzyme catalyses guanosine(in) = guanosine(out). It carries out the reaction inosine(in) = inosine(out). The catalysed reaction is uridine(out) = uridine(in). It catalyses the reaction cytidine(in) = cytidine(out). The enzyme catalyses thymidine(in) = thymidine(out). It carries out the reaction 2'-deoxyadenosine(in) = 2'-deoxyadenosine(out). The catalysed reaction is 2'-deoxycytidine(in) = 2'-deoxycytidine(out). It catalyses the reaction guanine(out) = guanine(in). The enzyme catalyses uracil(in) = uracil(out). It carries out the reaction (R)-noradrenaline(out) = (R)-noradrenaline(in). The catalysed reaction is dopamine(out) = dopamine(in). It catalyses the reaction serotonin(out) = serotonin(in). The enzyme catalyses tyramine(in) = tyramine(out). It carries out the reaction ATP(in) = ATP(out). Functionally, uniporter that mediates the facilitative transport of nucleoside across lysosomal and mitochondrial membranes. Functions as a non-electrogenic Na(+)-independent transporter. Substrate transport is pH-dependent and enhanced under acidic condition, probably reflecting the location of the transporter in acidic intracellular compartments. Proton is not a cotransporting ion but most likely change the ionization state of the transporter which dictates transport-permissible/impermissible conformation for nucleoside translocation. May direct the nucleoside transport from lysosomes to cytosol or cytosol to mitochondria to facilitate the fundamental function of salvage synthesis of nucleic acids. Involved in the transport of nucleosides (adenosine, guanosine, uridine, thymidine, cytidine and inosine) and deoxynucleosides (deoxyadenosine, deoxycytidine). Also mediates transport of purine nucleobases (adenine, guanine) and pyrimidine nucleobases (uracil). Also able to transport monoamine neurotransmitters dopamine, serotonin, noradrenaline and tyramine. Capable of transporting ATP. Mediates nucleoside export from lysosomes in macrophages, which regulates macrophage functions and numbers. This is Equilibrative nucleoside transporter 3 from Homo sapiens (Human).